We begin with the raw amino-acid sequence, 86 residues long: Toxin CngtIV (86 aa).

The first 19 residues, 1 to 19 (MNSLLIITACLVLIGTVWA), serve as a signal peptide directing secretion. In terms of domain architecture, LCN-type CS-alpha/beta spans 20-84 (KDGYLVDVKG…TWPLPNKRCG (65 aa)). Intrachain disulfides connect C30–C83, C34–C59, C43–C64, and C47–C66.

This sequence belongs to the long (4 C-C) scorpion toxin superfamily. Sodium channel inhibitor family. Beta subfamily. In terms of tissue distribution, expressed by the venom gland.

It localises to the secreted. Functionally, beta toxins bind voltage-independently at site-4 of sodium channels (Nav) and shift the voltage of activation toward more negative potentials thereby affecting sodium channel activation and promoting spontaneous and repetitive firing. This is Toxin CngtIV from Centruroides noxius (Mexican scorpion).